The primary structure comprises 384 residues: Dual-specificity RNA methyltransferase RlmN (384 aa).

The active-site Proton acceptor is Glu-105. The Radical SAM core domain maps to 111-350 (EDDRATLCVS…TIVRKTRGDD (240 aa)). Cys-118 and Cys-355 are disulfide-bonded. Residues Cys-125, Cys-129, and Cys-132 each contribute to the [4Fe-4S] cluster site. S-adenosyl-L-methionine is bound by residues 179–180 (GE), Ser-211, 233–235 (SLH), and Asn-312. The active-site S-methylcysteine intermediate is the Cys-355.

Belongs to the radical SAM superfamily. RlmN family. It depends on [4Fe-4S] cluster as a cofactor.

It is found in the cytoplasm. The enzyme catalyses adenosine(2503) in 23S rRNA + 2 reduced [2Fe-2S]-[ferredoxin] + 2 S-adenosyl-L-methionine = 2-methyladenosine(2503) in 23S rRNA + 5'-deoxyadenosine + L-methionine + 2 oxidized [2Fe-2S]-[ferredoxin] + S-adenosyl-L-homocysteine. It carries out the reaction adenosine(37) in tRNA + 2 reduced [2Fe-2S]-[ferredoxin] + 2 S-adenosyl-L-methionine = 2-methyladenosine(37) in tRNA + 5'-deoxyadenosine + L-methionine + 2 oxidized [2Fe-2S]-[ferredoxin] + S-adenosyl-L-homocysteine. Functionally, specifically methylates position 2 of adenine 2503 in 23S rRNA and position 2 of adenine 37 in tRNAs. m2A2503 modification seems to play a crucial role in the proofreading step occurring at the peptidyl transferase center and thus would serve to optimize ribosomal fidelity. This Escherichia coli O17:K52:H18 (strain UMN026 / ExPEC) protein is Dual-specificity RNA methyltransferase RlmN.